A 1118-amino-acid polypeptide reads, in one-letter code: Cytospin-A (1118 aa).

Disordered stretches follow at residues 1–63, 75–176, 294–324, and 359–391; these read MKKA…AGMA, KKST…NQIS, SLSPEITPGNQSDGGGTLTSSVEGSAPGSVE, and SSDDALDAPSSSESEGVPSIERSRKGSSGNASE. A compositionally biased stretch (low complexity) spans 80-90; it reads SSAAPSAPAPA. Positions 93–117 are enriched in polar residues; that stretch reads ISENKSKISTGTSSSAKRSTSAGNK. A compositionally biased stretch (basic and acidic residues) spans 120–131; the sequence is SSTRERLRERTR. Residues 133–145 show a composition bias toward polar residues; that stretch reads NQSKKLPSVSQGA. A compositionally biased stretch (basic and acidic residues) spans 158–171; it reads TAAEGDIRMSKSKS. Residues 168 to 281 are a coiled coil; the sequence is KSKSDNQISD…LNALGFSLEQ (114 aa). Positions 294–304 are enriched in polar residues; it reads SLSPEITPGNQ. Low complexity predominate over residues 359-373; that stretch reads SSDDALDAPSSSESE. A phosphoserine mark is found at Ser-385, Ser-386, and Ser-390. Coiled coils occupy residues 395 to 450 and 488 to 808; these read ACLT…MESL and RYME…RGRV. Phosphoserine occurs at positions 869, 882, and 888. The tract at residues 921-999 is disordered; that stretch reads TSSTSRPASL…STRSRIREER (79 aa). Over residues 947–957 the composition is skewed to basic and acidic residues; it reads RSSEEMKRDIS. Low complexity predominate over residues 972-992; the sequence is TTSPQLSLSSSPTASVTPSTR. A Calponin-homology (CH) domain is found at 1012–1117; it reads GSKRNALLKW…YVTAIYKYFE (106 aa).

This sequence belongs to the cytospin-A family. As to quaternary structure, may interact with both microtubules and actin cytoskeleton.

The protein resides in the cytoplasm. The protein localises to the cytoskeleton. It is found in the spindle. It localises to the cell junction. Its subcellular location is the gap junction. In terms of biological role, involved in cytokinesis and spindle organization. May play a role in actin cytoskeleton organization and microtubule stabilization and hence required for proper cell adhesion and migration. In Mus musculus (Mouse), this protein is Cytospin-A (Specc1l).